The chain runs to 43 residues: uncharacterized protein (43 aa).

This is an uncharacterized protein from Bacillus subtilis (strain 168).